A 221-amino-acid polypeptide reads, in one-letter code: U1 small nuclear ribonucleoprotein C (221 aa).

The Matrin-type zinc-finger motif lies at 4–36 (YFCDYCDTYLTHDSPSVRKTHCNGRKHKENVRV). The disordered stretch occupies residues 100-168 (SNPFPTSQAG…PPGAPTLPQP (69 aa)). The segment covering 134-166 (APAPPRMPGPLLMTPPPGAAAPGMAPPGAPTLP) has biased composition (pro residues).

It belongs to the U1 small nuclear ribonucleoprotein C family. U1 snRNP is composed of the 7 core Sm proteins B/B', D1, D2, D3, E, F and G that assemble in a heptameric protein ring on the Sm site of the small nuclear RNA to form the core snRNP, and at least 3 U1 snRNP-specific proteins U1-70K, U1-A and U1-C. U1-C interacts with U1 snRNA and the 5' splice-site region of the pre-mRNA.

Its subcellular location is the nucleus. Component of the spliceosomal U1 snRNP, which is essential for recognition of the pre-mRNA 5' splice-site and the subsequent assembly of the spliceosome. U1-C is directly involved in initial 5' splice-site recognition for both constitutive and regulated alternative splicing. The interaction with the 5' splice-site seems to precede base-pairing between the pre-mRNA and the U1 snRNA. Stimulates commitment or early (E) complex formation by stabilizing the base pairing of the 5' end of the U1 snRNA and the 5' splice-site region. This chain is U1 small nuclear ribonucleoprotein C, found in Branchiostoma floridae (Florida lancelet).